A 397-amino-acid polypeptide reads, in one-letter code: LIM/homeobox protein Lhx9 (397 aa).

Residues 40-60 (RSKTESRLAKGGQMNGRETNM) form a disordered region. 2 LIM zinc-binding domains span residues 69–130 (ALCA…RFSV) and 131–193 (QRCA…LLQG). Residues 267 to 326 (TKRMATSFKHHQLRTMKSYFAINHNPDAKDLKQLAQKTGLTKRVLQVWFQNARAKFRRNL) constitute a DNA-binding region (homeobox). Disordered stretches follow at residues 330–363 (ENGGVDKADGTSLPAPPSADSGALTPPGTATTLT) and 378–397 (SNLDSHEPGSPSQTTLTNLF). The span at 353–363 (LTPPGTATTLT) shows a compositional bias: low complexity. Over residues 387–397 (SPSQTTLTNLF) the composition is skewed to polar residues.

It localises to the nucleus. May be involved in gonadal development. In Gallus gallus (Chicken), this protein is LIM/homeobox protein Lhx9 (LHX9).